The following is a 203-amino-acid chain: Ribosomal RNA large subunit methyltransferase E (203 aa).

Residues Gly-59, Trp-61, Asp-79, Asn-95, and Asp-118 each contribute to the S-adenosyl-L-methionine site. Lys-158 acts as the Proton acceptor in catalysis.

It belongs to the class I-like SAM-binding methyltransferase superfamily. RNA methyltransferase RlmE family.

The protein localises to the cytoplasm. It carries out the reaction uridine(2552) in 23S rRNA + S-adenosyl-L-methionine = 2'-O-methyluridine(2552) in 23S rRNA + S-adenosyl-L-homocysteine + H(+). In terms of biological role, specifically methylates the uridine in position 2552 of 23S rRNA at the 2'-O position of the ribose in the fully assembled 50S ribosomal subunit. This is Ribosomal RNA large subunit methyltransferase E from Wigglesworthia glossinidia brevipalpis.